A 412-amino-acid chain; its full sequence is Aspartate kinase Ask_LysC (412 aa).

The ACT domain occupies 265–332 (LTIRGVPDTP…QGIAAEMGAR (68 aa)).

The protein belongs to the aspartokinase family.

Its subcellular location is the cytoplasm. It carries out the reaction L-aspartate + ATP = 4-phospho-L-aspartate + ADP. It functions in the pathway amino-acid biosynthesis; L-lysine biosynthesis via DAP pathway; (S)-tetrahydrodipicolinate from L-aspartate: step 1/4. It participates in amino-acid biosynthesis; L-methionine biosynthesis via de novo pathway; L-homoserine from L-aspartate: step 1/3. The protein operates within amino-acid biosynthesis; L-threonine biosynthesis; L-threonine from L-aspartate: step 1/5. Its activity is regulated as follows. Allosterically and strongly feedback inhibited by tryptophan. Addition of lysine alone slightly enhances activity. The simultaneous addition of lysine and tryptophan leads to very strong feedback inhibition of the enzyme. The feedback control by tryptophan is reduced in the presence of the compatible solutes hydroxyectoine or ectoine. Involved in the biosynthesis of L-aspartate-beta-semialdehyde which is a central intermediate in the biosynthesis of different amino acids (L-lysine, L-methionine, L-threonine). Catalyzes the phosphorylation of the beta-carboxyl group of L-aspartate to yield 4-phospho-L-aspartate. This Stutzerimonas stutzeri (strain A1501) (Pseudomonas stutzeri) protein is Aspartate kinase Ask_LysC (lysC).